The sequence spans 278 residues: Asnovolin E/Chermesin D methyltransferase nvfJ (278 aa).

S-adenosyl-L-methionine is bound by residues 125-126, 152-153, and 153-154; these read DL, NI, and IL.

The protein belongs to the class I-like SAM-binding methyltransferase superfamily. As to quaternary structure, homodimer.

The catalysed reaction is chermesin D + S-adenosyl-L-methionine = chermesin D methyl ester + S-adenosyl-L-homocysteine. It catalyses the reaction asnovolin I + S-adenosyl-L-methionine = asnovolin K + S-adenosyl-L-homocysteine. It participates in secondary metabolite biosynthesis; terpenoid biosynthesis. Functionally, methyltransferase; part of the gene cluster that mediates the biosynthesis of novofumigatonin, a heavily oxygenated meroterpenoid containing a unique orthoester moiety. The first step of the pathway is the synthesis of 3,5-dimethylorsellinic acid (DMOA) by the polyketide synthase nvfA via condensation of one acetyl-CoA starter unit with 3 malonyl-CoA units and 2 methylations. DMOA is then converted to farnesyl-DMOA by the farnesyltransferase nvfB. Epoxydation by FAD-dependent monooxygenase nvfK, followed by a protonation-initiated cyclization catalyzed by the terpene cyclase nvfL leads to the production of asnavolin H. The short chain dehydrogenase nvfC then as a 3-OH dehydrogenase of asnovolin H to yield chemesin D. There are two branches to synthesize asnovolin A from chemesin D. In one branch, chemesin D undergoes Baeyer-Villiger oxidation by nvfH, methylation by nvfJ, and enoyl reduction by the nvfM D enoylreductase that reduces the double bond between C-5'and C-6', to form respectively asnovolin I, asnovolin K, and asnovolin A. In the other branch, the methylation precedes the Baeyer-Villiger oxidation and the enoyl reduction to yield asnovolin A via the asnovolin J intermediate. Asnovolin A is further converted to fumigatonoid A by the Fe(II)/2-oxoglutarate-dependent dioxygenase nvfI that catalyzes an endoperoxidation reaction. The alpha/beta hydrolase nvfD then acts as an epimerase that converts fumigatonoid A to its C-5' epimer, which then undergoes spontaneous or nvfD-catalyzed lactonization. The following step utilizes the ketoreductase nvfG to produce fumigatonoid B. The dioxygenase nvfE further converts fumigatonoid B into fumigatonoid C. Finally the Fe(II)/2-oxoglutarate-dependent dioxygenase nvfF catalyzes two rounds of oxidation to transform fumigatonoid C into the end product, novofumigatonin A. The chain is Asnovolin E/Chermesin D methyltransferase nvfJ from Aspergillus novofumigatus (strain IBT 16806).